A 156-amino-acid chain; its full sequence is Small ribosomal subunit protein uS7 (156 aa).

This sequence belongs to the universal ribosomal protein uS7 family. In terms of assembly, part of the 30S ribosomal subunit. Contacts proteins S9 and S11.

Functionally, one of the primary rRNA binding proteins, it binds directly to 16S rRNA where it nucleates assembly of the head domain of the 30S subunit. Is located at the subunit interface close to the decoding center, probably blocks exit of the E-site tRNA. This Tremblaya princeps protein is Small ribosomal subunit protein uS7.